An 816-amino-acid polypeptide reads, in one-letter code: S-layer protein (816 aa).

The signal sequence occupies residues M1–A29. 3 SLH domains span residues A30–P93, S94–G150, and P152–V215. One can recognise a BIG2 domain in the interval F403 to L480.

It is found in the secreted. Its subcellular location is the cell wall. The protein resides in the S-layer. Its function is as follows. The S-layer is a paracrystalline mono-layered assembly of proteins which coat the surface of bacteria. The protein is S-layer protein of Bacillus thuringiensis subsp. finitimus.